A 406-amino-acid polypeptide reads, in one-letter code: Histidine--tRNA ligase (406 aa).

It belongs to the class-II aminoacyl-tRNA synthetase family. Homodimer.

The protein localises to the cytoplasm. It catalyses the reaction tRNA(His) + L-histidine + ATP = L-histidyl-tRNA(His) + AMP + diphosphate + H(+). This Nitratiruptor sp. (strain SB155-2) protein is Histidine--tRNA ligase.